Reading from the N-terminus, the 447-residue chain is Na(+)-translocating NADH-quinone reductase subunit A (447 aa).

The protein belongs to the NqrA family. As to quaternary structure, composed of six subunits; NqrA, NqrB, NqrC, NqrD, NqrE and NqrF.

The enzyme catalyses a ubiquinone + n Na(+)(in) + NADH + H(+) = a ubiquinol + n Na(+)(out) + NAD(+). Its function is as follows. NQR complex catalyzes the reduction of ubiquinone-1 to ubiquinol by two successive reactions, coupled with the transport of Na(+) ions from the cytoplasm to the periplasm. NqrA to NqrE are probably involved in the second step, the conversion of ubisemiquinone to ubiquinol. The polypeptide is Na(+)-translocating NADH-quinone reductase subunit A (Cellvibrio japonicus (strain Ueda107) (Pseudomonas fluorescens subsp. cellulosa)).